Reading from the N-terminus, the 428-residue chain is MDTVFALGSAQGRAGVSVIRLSGPAAWAVAETICGSLPDPRKSAVRVLRAQDGSVIDQALVLAFKAPHSFTGEDVVEFHVHGSIAVVRTVLDALSDQDVARLAEAGEFTRRALENGKLDLSQVEGLADLIDAETEAQRRQAVRVLTGALGEKVEVWRSKLIRAAALIEATIDFADEDVPVDVTPEVTSLLEDVSSDVRTEVAGTHVAERIRSGFEIALVGAPNAGKSTLLNKLAGRDAAITSEIAGTTRDVIEVRMDLGGLPVTFLDTAGLRQSADEIETIGIERAIKRAQEADLRVFLSGPDERLLIEPLEDDIRLTPKVDLAPGSQTGISGKTGQGIPELLEKIRSVFSERVSAVGLATHERHRLAMQRALEDLDNSFEALLRGPEFYDITAQELRSAIRALETLVGRIDAENLLDEIFSSFCLGK.

(6S)-5-formyl-5,6,7,8-tetrahydrofolate is bound by residues arginine 20, glutamate 77, and lysine 117. In terms of domain architecture, TrmE-type G spans 213–351; sequence GFEIALVGAP…LLEKIRSVFS (139 aa). Position 223 (asparagine 223) interacts with K(+). Residues 223–228, 242–248, and 267–270 contribute to the GTP site; these read NAGKST, SEIAGTT, and DTAG. Residue serine 227 coordinates Mg(2+). K(+) is bound by residues serine 242, isoleucine 244, and threonine 247. Threonine 248 contributes to the Mg(2+) binding site. (6S)-5-formyl-5,6,7,8-tetrahydrofolate is bound at residue lysine 428.

It belongs to the TRAFAC class TrmE-Era-EngA-EngB-Septin-like GTPase superfamily. TrmE GTPase family. In terms of assembly, homodimer. Heterotetramer of two MnmE and two MnmG subunits. The cofactor is K(+).

The protein resides in the cytoplasm. Its function is as follows. Exhibits a very high intrinsic GTPase hydrolysis rate. Involved in the addition of a carboxymethylaminomethyl (cmnm) group at the wobble position (U34) of certain tRNAs, forming tRNA-cmnm(5)s(2)U34. The sequence is that of tRNA modification GTPase MnmE from Roseobacter denitrificans (strain ATCC 33942 / OCh 114) (Erythrobacter sp. (strain OCh 114)).